The following is a 321-amino-acid chain: Biotin synthase (321 aa).

One can recognise a Radical SAM core domain in the interval 44 to 273; the sequence is FCGNVFDLCT…DGFVRIAAGR (230 aa). [4Fe-4S] cluster is bound by residues Cys-62, Cys-66, and Cys-69. The [2Fe-2S] cluster site is built by Ser-106, Cys-138, Cys-198, and Arg-268.

It belongs to the radical SAM superfamily. Biotin synthase family. As to quaternary structure, homodimer. [4Fe-4S] cluster is required as a cofactor. Requires [2Fe-2S] cluster as cofactor.

It catalyses the reaction (4R,5S)-dethiobiotin + (sulfur carrier)-SH + 2 reduced [2Fe-2S]-[ferredoxin] + 2 S-adenosyl-L-methionine = (sulfur carrier)-H + biotin + 2 5'-deoxyadenosine + 2 L-methionine + 2 oxidized [2Fe-2S]-[ferredoxin]. The protein operates within cofactor biosynthesis; biotin biosynthesis; biotin from 7,8-diaminononanoate: step 2/2. Its function is as follows. Catalyzes the conversion of dethiobiotin (DTB) to biotin by the insertion of a sulfur atom into dethiobiotin via a radical-based mechanism. This is Biotin synthase from Akkermansia muciniphila (strain ATCC BAA-835 / DSM 22959 / JCM 33894 / BCRC 81048 / CCUG 64013 / CIP 107961 / Muc).